The sequence spans 382 residues: Exostosin-1 homolog (382 aa).

An N-terminal signal peptide occupies residues 1-20; it reads MQNVMKFHLVIFMLFGSVRL. N268 is a glycosylation site (N-linked (GlcNAc...) asparagine).

Belongs to the glycosyltransferase 47 family. Interacts with rib-2.

The protein localises to the endoplasmic reticulum. It is found in the golgi apparatus. Functionally, required for the biosynthesis of heparan sulfate by positively regulating N-acetylglucosamine transferase II (GlcNAcT-II) and glucuronyl transferase II (GlcAT-II) activities of glycosyltransferase rib-2. Probably not directly involved in chondroitin sulfate biosynthesis but negatively regulates chondroitin sulfate levels. Maternally required for normal ventral epidermal enclosure and for embryo elongation during the early stages of embryonic development. In addition, involved in the elongation of the pharyngeal isthmus and in the organization of the actin cytoskeleton in the pharyngeal muscles during the later stages embryonic development. In adults, regulates egg-laying and the normal morphogenesis of the vulva. Also involved in the directed migration of hermaphrodite-specific neurons. This is Exostosin-1 homolog (rib-1) from Caenorhabditis elegans.